The chain runs to 474 residues: Bifunctional protein HldE (474 aa).

Residues 1 to 318 (MKLSMPRFDQ…RAIQREEGSE (318 aa)) form a ribokinase region. 194 to 197 (NLSE) provides a ligand contact to ATP. Asp263 is a catalytic residue. Residues 343–474 (FTNGCFDILH…AIVEKIRKSE (132 aa)) form a cytidylyltransferase region.

In the N-terminal section; belongs to the carbohydrate kinase PfkB family. This sequence in the C-terminal section; belongs to the cytidylyltransferase family. In terms of assembly, homodimer.

It catalyses the reaction D-glycero-beta-D-manno-heptose 7-phosphate + ATP = D-glycero-beta-D-manno-heptose 1,7-bisphosphate + ADP + H(+). It carries out the reaction D-glycero-beta-D-manno-heptose 1-phosphate + ATP + H(+) = ADP-D-glycero-beta-D-manno-heptose + diphosphate. It participates in nucleotide-sugar biosynthesis; ADP-L-glycero-beta-D-manno-heptose biosynthesis; ADP-L-glycero-beta-D-manno-heptose from D-glycero-beta-D-manno-heptose 7-phosphate: step 1/4. It functions in the pathway nucleotide-sugar biosynthesis; ADP-L-glycero-beta-D-manno-heptose biosynthesis; ADP-L-glycero-beta-D-manno-heptose from D-glycero-beta-D-manno-heptose 7-phosphate: step 3/4. Functionally, catalyzes the phosphorylation of D-glycero-D-manno-heptose 7-phosphate at the C-1 position to selectively form D-glycero-beta-D-manno-heptose-1,7-bisphosphate. Its function is as follows. Catalyzes the ADP transfer from ATP to D-glycero-beta-D-manno-heptose 1-phosphate, yielding ADP-D-glycero-beta-D-manno-heptose. In Pseudomonas fluorescens (strain Pf0-1), this protein is Bifunctional protein HldE.